The sequence spans 682 residues: Potassium-transporting ATPase ATP-binding subunit (682 aa).

4 helical membrane-spanning segments follow: residues 34–54 (PVMF…VAMA), 62–82 (AGFT…ANVA), 219–239 (IALT…TATL), and 254–274 (VLVA…LSAI). Asp-307 functions as the 4-aspartylphosphate intermediate in the catalytic mechanism. ATP is bound by residues Asp-344, Glu-348, 377–384 (FTAQTRMS), and Lys-395. Mg(2+) is bound by residues Asp-518 and Asp-522. The next 3 helical transmembrane spans lie at 588-608 (FAII…LNVM), 616-636 (AILS…PLAL), and 662-682 (LVVP…FGLV).

It belongs to the cation transport ATPase (P-type) (TC 3.A.3) family. Type IA subfamily. The system is composed of three essential subunits: KdpA, KdpB and KdpC.

It is found in the cell inner membrane. The catalysed reaction is K(+)(out) + ATP + H2O = K(+)(in) + ADP + phosphate + H(+). In terms of biological role, part of the high-affinity ATP-driven potassium transport (or Kdp) system, which catalyzes the hydrolysis of ATP coupled with the electrogenic transport of potassium into the cytoplasm. This subunit is responsible for energy coupling to the transport system and for the release of the potassium ions to the cytoplasm. The chain is Potassium-transporting ATPase ATP-binding subunit from Enterobacter sp. (strain 638).